Consider the following 364-residue polypeptide: Alanine racemase (364 aa).

K39 functions as the Proton acceptor; specific for D-alanine in the catalytic mechanism. Residue K39 is modified to N6-(pyridoxal phosphate)lysine. R137 is a substrate binding site. Y258 functions as the Proton acceptor; specific for L-alanine in the catalytic mechanism. M306 is a substrate binding site.

The protein belongs to the alanine racemase family. Pyridoxal 5'-phosphate serves as cofactor.

It catalyses the reaction L-alanine = D-alanine. It functions in the pathway amino-acid biosynthesis; D-alanine biosynthesis; D-alanine from L-alanine: step 1/1. In terms of biological role, catalyzes the interconversion of L-alanine and D-alanine. May also act on other amino acids. This is Alanine racemase (alr) from Methylobacterium sp. (strain 4-46).